The primary structure comprises 187 residues: Dirigent protein 23 (187 aa).

A signal peptide spans 1–24 (MAKEEYVSRMLVMLIMIMPLVAQG). Residue Asn-182 is glycosylated (N-linked (GlcNAc...) asparagine).

Belongs to the plant dirigent protein family. As to quaternary structure, homodimer.

Its subcellular location is the secreted. The protein localises to the extracellular space. The protein resides in the apoplast. In terms of biological role, dirigent proteins impart stereoselectivity on the phenoxy radical-coupling reaction, yielding optically active lignans from two molecules of coniferyl alcohol in the biosynthesis of lignans, flavonolignans, and alkaloids and thus plays a central role in plant secondary metabolism. The sequence is that of Dirigent protein 23 (DIR23) from Arabidopsis thaliana (Mouse-ear cress).